The chain runs to 681 residues: Methionine--tRNA ligase (681 aa).

The 'HIGH' region signature appears at 27 to 37; sequence DYANGTPHIGH. Positions 316 to 320 match the 'KMSKS' region motif; that stretch reads KMGKS. An ATP-binding site is contributed by Lys319. Residues 522 to 571 are disordered; it reads FPKPEPKADETKNAEAKPPKPQAKKEKKTVTDTAPAKTTEQKPEAAAPAQ. The segment covering 525–539 has biased composition (basic and acidic residues); the sequence is PEPKADETKNAEAKP. The 102-residue stretch at 580–681 folds into the tRNA-binding domain; the sequence is DFAKIDLRIA…LDLPSGTKVR (102 aa).

It belongs to the class-I aminoacyl-tRNA synthetase family. MetG type 2B subfamily. As to quaternary structure, homodimer.

It is found in the cytoplasm. The catalysed reaction is tRNA(Met) + L-methionine + ATP = L-methionyl-tRNA(Met) + AMP + diphosphate. In terms of biological role, is required not only for elongation of protein synthesis but also for the initiation of all mRNA translation through initiator tRNA(fMet) aminoacylation. The chain is Methionine--tRNA ligase (metG) from Deinococcus radiodurans (strain ATCC 13939 / DSM 20539 / JCM 16871 / CCUG 27074 / LMG 4051 / NBRC 15346 / NCIMB 9279 / VKM B-1422 / R1).